Reading from the N-terminus, the 376-residue chain is 2-oxoglutarate synthase subunit KorA (376 aa).

As to quaternary structure, heterotetramer of the KorA, KorB, KorC and KorD subunits.

The catalysed reaction is 2 oxidized [2Fe-2S]-[ferredoxin] + 2-oxoglutarate + CoA = succinyl-CoA + 2 reduced [2Fe-2S]-[ferredoxin] + CO2 + H(+). This is 2-oxoglutarate synthase subunit KorA (korA) from Methanothermobacter thermautotrophicus (strain ATCC 29096 / DSM 1053 / JCM 10044 / NBRC 100330 / Delta H) (Methanobacterium thermoautotrophicum).